The primary structure comprises 312 residues: Malate dehydrogenase (312 aa).

NAD(+) contacts are provided by residues 7 to 13 and Asp-34; that span reads GAAGGIG. Arg-81 and Arg-87 together coordinate substrate. NAD(+) is bound by residues Asn-94 and 117–119; that span reads ITN. Residues Asn-119 and Arg-153 each contribute to the substrate site. Residue His-177 is the Proton acceptor of the active site. Position 227 (Met-227) interacts with NAD(+).

Belongs to the LDH/MDH superfamily. MDH type 1 family. Homodimer.

The enzyme catalyses (S)-malate + NAD(+) = oxaloacetate + NADH + H(+). In terms of biological role, catalyzes the reversible oxidation of malate to oxaloacetate. The sequence is that of Malate dehydrogenase from Salmonella choleraesuis (strain SC-B67).